Consider the following 369-residue polypeptide: MLLLPLSVLLLLTQPWRSLGAEMKIYSQKTMANACTLVMCSPPEDGLPGRDGRDGREGPRGEKGDPGSPGPAGRAGMPGPAGPIGLKGDNGSAGEPGPKGDTGPPGPPGMPGPAGREGPSGKQGSMGPPGTPGPKGDTGPKGGVGAPGIQGSPGPAGLKGERGAPGEPGAPGRAGAPGPAGAIGPQGPSGARGPPGLKGDRGTPGERGAKGESGLAEVNALRQRVGILEGQLQRLQNAFSQYKKAMLFPNGRSVGEKIFKTEGSEKTFQDAQQICTQAGGQLPSPRSAAENEALTQLATAQNKAAFLSMSDTRKEGTFIYPTGEPLVYSNWAPQEPNNDGGSENCVEIFPNGKWNDKVCGEQRLVICEF.

The signal sequence occupies residues 1 to 20 (MLLLPLSVLLLLTQPWRSLG). S-nitrosocysteine is present on residues Cys35 and Cys40. Positions 41–215 (SPPEDGLPGR…ERGAKGESGL (175 aa)) are disordered. In terms of domain architecture, Collagen-like spans 46-216 (GLPGRDGRDG…RGAKGESGLA (171 aa)). The span at 47–65 (LPGRDGRDGREGPRGEKGD) shows a compositional bias: basic and acidic residues. Residue Pro78 is modified to 4-hydroxyproline. Residue Lys87 is modified to 5-hydroxylysine. N-linked (GlcNAc...) asparagine glycosylation is present at Asn90. Residue Pro96 is modified to 4-hydroxyproline. Lys99 is subject to 5-hydroxylysine. Residues 139–148 (GPKGGVGAPG) show a composition bias toward gly residues. 4-hydroxyproline occurs at positions 165 and 171. The segment covering 165-191 (PGEPGAPGRAGAPGPAGAIGPQGPSGA) has biased composition (low complexity). The segment covering 198–210 (KGDRGTPGERGAK) has biased composition (basic and acidic residues). Residues 217–248 (EVNALRQRVGILEGQLQRLQNAFSQYKKAMLF) are a coiled coil. Positions 254–369 (VGEKIFKTEG…GEQRLVICEF (116 aa)) constitute a C-type lectin domain. Disulfide bonds link Cys275/Cys367 and Cys345/Cys359.

Belongs to the SFTPD family. As to quaternary structure, oligomeric complex of 4 set of homotrimers. In terms of processing, hydroxylation on proline residues within the sequence motif, GXPG, is most likely to be 4-hydroxy as this fits the requirement for 4-hydroxylation in vertebrates. Post-translationally, S-nitrosylation at Cys-35 and Cys-40 alters the quaternary structure which results in a pro-inflammatory chemoattractive signaling activity with macrophages.

It localises to the secreted. The protein localises to the extracellular space. It is found in the extracellular matrix. Its subcellular location is the surface film. In terms of biological role, contributes to the lung's defense against inhaled microorganisms, organic antigens and toxins. Interacts with compounds such as bacterial lipopolysaccharides, oligosaccharides and fatty acids and modulates leukocyte action in immune response. May participate in the extracellular reorganization or turnover of pulmonary surfactant. Binds strongly maltose residues and to a lesser extent other alpha-glucosyl moieties. The chain is Pulmonary surfactant-associated protein D (SFTPD) from Bos taurus (Bovine).